The following is an 84-amino-acid chain: U4-theraphotoxin-Hhn1b (84 aa).

Positions 1–22 (MKVTLIAILTCAAVLVLHTTAA) are cleaved as a signal peptide. Positions 23 to 47 (EELEESQLMEVGMPDTELAAVDEER) are excised as a propeptide. Disulfide bonds link cysteine 51/cysteine 65, cysteine 55/cysteine 76, and cysteine 70/cysteine 81.

It belongs to the neurotoxin 12 (Hwtx-2) family. 02 (Hwtx-2) subfamily. Expressed by the venom gland.

The protein localises to the secreted. In terms of biological role, postsynaptic neurotoxin. The chain is U4-theraphotoxin-Hhn1b from Cyriopagopus hainanus (Chinese bird spider).